A 450-amino-acid chain; its full sequence is UPF0210 protein CPF_1748 (450 aa).

This sequence belongs to the UPF0210 family. As to quaternary structure, homodimer.

The sequence is that of UPF0210 protein CPF_1748 from Clostridium perfringens (strain ATCC 13124 / DSM 756 / JCM 1290 / NCIMB 6125 / NCTC 8237 / Type A).